The sequence spans 502 residues: Glycerol kinase (502 aa).

Thr14 serves as a coordination point for ADP. ATP contacts are provided by Thr14, Thr15, and Ser16. Sn-glycerol 3-phosphate is bound at residue Thr14. Residue Arg18 coordinates ADP. Residues Arg84, Glu85, Tyr136, and Asp246 each contribute to the sn-glycerol 3-phosphate site. Positions 84, 85, 136, 246, and 247 each coordinate glycerol. The ADP site is built by Thr268 and Gly311. The ATP site is built by Thr268, Gly311, Gln315, and Gly412. ADP is bound by residues Gly412 and Asn416.

It belongs to the FGGY kinase family.

The enzyme catalyses glycerol + ATP = sn-glycerol 3-phosphate + ADP + H(+). Its pathway is polyol metabolism; glycerol degradation via glycerol kinase pathway; sn-glycerol 3-phosphate from glycerol: step 1/1. With respect to regulation, inhibited by fructose 1,6-bisphosphate (FBP). In terms of biological role, key enzyme in the regulation of glycerol uptake and metabolism. Catalyzes the phosphorylation of glycerol to yield sn-glycerol 3-phosphate. The polypeptide is Glycerol kinase (Pasteurella multocida (strain Pm70)).